We begin with the raw amino-acid sequence, 363 residues long: Probable endopolygalacturonase B (363 aa).

Residues 1–20 form the signal peptide; it reads MQLLQSSVIAATVGAALVAA. A propeptide spanning residues 21–28 is cleaved from the precursor; it reads VPVELEAR. A disulfide bridge links Cys31 with Cys46. PbH1 repeat units follow at residues 158 to 187, 188 to 209, 210 to 230, 239 to 260, 268 to 290, and 302 to 347; these read SDNLNITDVTIDNSAGTAEGHNTDAFDVGS, STYINIDGATVYNQDDCLAINS, GSHITFTNGYCDGGHGLSIGS, VEDVTISNSKVVNSQNGVRIKT, VSNVKFEDITLSGITKYGLIVEQ, and TNGI…SITG. The N-linked (GlcNAc...) asparagine glycan is linked to Asn162. Asp202 serves as the catalytic Proton donor. The cysteines at positions 204 and 220 are disulfide-linked. The active site involves His224. 2 disulfides stabilise this stretch: Cys330/Cys335 and Cys354/Cys363.

This sequence belongs to the glycosyl hydrolase 28 family.

Its subcellular location is the secreted. The enzyme catalyses (1,4-alpha-D-galacturonosyl)n+m + H2O = (1,4-alpha-D-galacturonosyl)n + (1,4-alpha-D-galacturonosyl)m.. Involved in maceration and soft-rotting of plant tissue. Hydrolyzes the 1,4-alpha glycosidic bonds of de-esterified pectate in the smooth region of the plant cell wall. This Aspergillus flavus (strain ATCC 200026 / FGSC A1120 / IAM 13836 / NRRL 3357 / JCM 12722 / SRRC 167) protein is Probable endopolygalacturonase B (pgaB).